A 328-amino-acid polypeptide reads, in one-letter code: Probable cell division protein WhiA (328 aa).

Residues 276–309 (SLEELGRLADPQMTKDAVAGRIRRLLHMADKKAS) constitute a DNA-binding region (H-T-H motif).

It belongs to the WhiA family.

Its function is as follows. Involved in cell division and chromosome segregation. This is Probable cell division protein WhiA from Corynebacterium diphtheriae (strain ATCC 700971 / NCTC 13129 / Biotype gravis).